Here is a 422-residue protein sequence, read N- to C-terminus: Light-independent protochlorophyllide reductase subunit N (422 aa).

C26, C51, and C112 together coordinate [4Fe-4S] cluster.

It belongs to the BchN/ChlN family. As to quaternary structure, protochlorophyllide reductase is composed of three subunits; BchL, BchN and BchB. Forms a heterotetramer of two BchB and two BchN subunits. Requires [4Fe-4S] cluster as cofactor.

It carries out the reaction chlorophyllide a + oxidized 2[4Fe-4S]-[ferredoxin] + 2 ADP + 2 phosphate = protochlorophyllide a + reduced 2[4Fe-4S]-[ferredoxin] + 2 ATP + 2 H2O. The protein operates within porphyrin-containing compound metabolism; bacteriochlorophyll biosynthesis (light-independent). Component of the dark-operative protochlorophyllide reductase (DPOR) that uses Mg-ATP and reduced ferredoxin to reduce ring D of protochlorophyllide (Pchlide) to form chlorophyllide a (Chlide). This reaction is light-independent. The NB-protein (BchN-BchB) is the catalytic component of the complex. The polypeptide is Light-independent protochlorophyllide reductase subunit N (Acidiphilium rubrum).